The primary structure comprises 402 residues: Advanced glycosylation end product-specific receptor (402 aa).

The N-terminal stretch at 1 to 22 (MPAGTAARAWVLVLALWGAVAG) is a signal peptide. The 87-residue stretch at 23-109 (GQNITARIGE…ATNRRGKEVK (87 aa)) folds into the Ig-like V-type domain. Residues 23–340 (GQNITARIGE…VGESGLGTLA (318 aa)) are Extracellular-facing. N-linked (GlcNAc...) asparagine glycans are attached at residues Asn25 and Asn80. 2 disulfide bridges follow: Cys38–Cys98 and Cys143–Cys206. Ig-like C2-type domains follow at residues 123–219 (PEIV…RPLN) and 233–315 (PEGI…PPVS). The interval 295 to 332 (GTYSCVATHPSHGPQESPPVSIRVTETGDEGPAEGSVG) is disordered. Residues 341 to 361 (LALGILGGLGVVALLVGAILW) traverse the membrane as a helical segment. Over 362 to 402 (RKRQPRREERKAPESQEDEEERAELNQSEEAEMPENGAGGP) the chain is Cytoplasmic. The disordered stretch occupies residues 365-402 (QPRREERKAPESQEDEEERAELNQSEEAEMPENGAGGP). 2 positions are modified to phosphoserine; by ATM: Ser376 and Ser389. The span at 376–394 (SQEDEEERAELNQSEEAEM) shows a compositional bias: acidic residues.

In terms of assembly, constitutive homodimer; disulfide-linked. Forms homooligomers. Interacts with S100A1 and APP. Interacts with S100B, S100A12 and S100A14. Interacts with TIRAP. Interacts with HMGB1. Interacts with LGP2; this interaction plays an important role in AGER-mediated pro-inflammatory responses and cytokine release. Interacts with double-strand break repair protein MRE11 which is a core component of the MRN complex; the interaction enhances MRE11 endonuclease activity and promotes DNA repair. Interacts with the MCM2-7 complex via interaction with complex member MCM2; the interaction is increased following DNA replication stress and stabilizes the MCM2-7 complex at replication forks. Post-translationally, phosphorylated on its cytoplasmic domain by PKCzeta/PRKCZ upon ligand binding. Phosphorylated by ATM following DNA damage. In terms of processing, targeted by the ubiquitin E3 ligase subunit FBXO10 to mediate its ubiquitination and degradation. In terms of tissue distribution, isoform 1: Expressed at higher levels in the coronary arterioles in type 2 diabetic mice (at protein level). Endothelial cells. Expressed in lung, kidney, brain and heart. Most prevalent isoform with the highest level in heart. Isoform 2: Expressed in brain, lung, kidney and small intestine with the highest level in lung. Expressed in brain, lung, kidney and small intestine with the highest level in small intestine (at protein level). Detected in neurons of the cerebrum, bronchial epithelium, endothelial cells, tubular cells of kidney and epithelial cells of small intestine (at protein level). Expression is increased in the kidney of diabetic wild-type mice (at protein level), but not in the other tissues. Expressed only in kidney. Expression is increased in the kidney of diabetic mice. Isoform 3: Expressed in lung, kidney and heart. The second most prevalent isoform with the highest level in lung. Not expressed in brain. Isoform 4: Expressed at very low level in lung only. Isoform 5: Expressed at very low level in lung only. Isoform 6: Expressed at very low level in lung only. Isoform 7: Expressed at very low level in heart only. Isoform 8: Expressed at very low level in lung only. Isoform 9: Expressed at very low level in heart only. Isoform 10: Expressed in lung, brain, heart and kidney with a very high level in kidney. Isoform 11: Expressed in brain, kidney and heart. Not expressed in lung. Isoform 12: Expressed at very low level in lung and kidney. Isoform 13: Expressed at very low level in lung only.

The protein resides in the cell membrane. It is found in the cell projection. It localises to the phagocytic cup. The protein localises to the early endosome. Its subcellular location is the nucleus. The protein resides in the secreted. In terms of biological role, cell surface pattern recognition receptor that senses endogenous stress signals with a broad ligand repertoire including advanced glycation end products, S100 proteins, high-mobility group box 1 protein/HMGB1, amyloid beta/APP oligomers, nucleic acids, histones, phospholipids and glycosaminoglycans. Advanced glycosylation end products are nonenzymatically glycosylated proteins which accumulate in vascular tissue in aging and at an accelerated rate in diabetes. These ligands accumulate at inflammatory sites during the pathogenesis of various diseases including diabetes, vascular complications, neurodegenerative disorders and cancers, and RAGE transduces their binding into pro-inflammatory responses. Upon ligand binding, uses TIRAP and MYD88 as adapters to transduce the signal ultimately leading to the induction of inflammatory cytokines IL6, IL8 and TNFalpha through activation of NF-kappa-B. Interaction with S100A12 on endothelium, mononuclear phagocytes, and lymphocytes triggers cellular activation, with generation of key pro-inflammatory mediators. Interaction with S100B after myocardial infarction may play a role in myocyte apoptosis by activating ERK1/2 and p53/TP53 signaling. Contributes to the translocation of amyloid-beta peptide (ABPP) across the cell membrane from the extracellular to the intracellular space in cortical neurons. ABPP-initiated RAGE signaling, especially stimulation of p38 mitogen-activated protein kinase (MAPK), has the capacity to drive a transport system delivering ABPP as a complex with RAGE to the intraneuronal space. Participates in endothelial albumin transcytosis together with HMGB1 through the RAGE/SRC/Caveolin-1 pathway, leading to endothelial hyperpermeability. Mediates the loading of HMGB1 in extracellular vesicles (EVs) that shuttle HMGB1 to hepatocytes by transferrin-mediated endocytosis and subsequently promote hepatocyte pyroptosis by activating the NLRP3 inflammasome. Binds to DNA and promotes extracellular hypomethylated DNA (CpG DNA) uptake by cells via the endosomal route to activate inflammatory responses. Mediates phagocytosis by non-professional phagocytes (NPP) and this is enhanced by binding to ligands including RNA, DNA, HMGB1 and histones. Promotes NPP-mediated phagocytosis of Saccharomyces cerevisiae spores by binding to RNA attached to the spore wall. Also promotes NPP-mediated phagocytosis of apoptotic cells. Following DNA damage, recruited to DNA double-strand break sites where it colocalizes with the MRN repair complex via interaction with double-strand break repair protein MRE11. Enhances the endonuclease activity of MRE11, promoting the end resection of damaged DNA. Promotes DNA damage repair in trophoblasts which enhances trophoblast invasion and contributes to placental development and maintenance. Protects cells from DNA replication stress by localizing to damaged replication forks where it stabilizes the MCM2-7 complex and promotes faithful progression of the replication fork. Functionally, is able to advanced glycosylation end product (AGE)-induce nuclear factor NF-kappa-B activation. Down-regulates receptor for advanced glycosylation end products (RAGE)-ligand induced signaling through various MAPK pathways including ERK1/2, p38 and SAPK/JNK. Significantly affects tumor cell properties through decreasing cell migration, invasion, adhesion and proliferation, and increasing cellular apoptosis. Exhibits drastic inhibition on tumorigenesis in vitro. The sequence is that of Advanced glycosylation end product-specific receptor (Ager) from Mus musculus (Mouse).